The sequence spans 333 residues: Glyceraldehyde-3-phosphate dehydrogenase (333 aa).

NAD(+) contacts are provided by residues 11–12 (RI), D35, and T121. Residues 151–153 (SCT) and T182 contribute to the D-glyceraldehyde 3-phosphate site. The Nucleophile role is filled by C152. Residue N183 coordinates NAD(+). D-glyceraldehyde 3-phosphate contacts are provided by residues R197, 210-211 (TG), and R233. N315 is a binding site for NAD(+).

Belongs to the glyceraldehyde-3-phosphate dehydrogenase family. As to quaternary structure, homotetramer.

It localises to the cytoplasm. The catalysed reaction is D-glyceraldehyde 3-phosphate + phosphate + NAD(+) = (2R)-3-phospho-glyceroyl phosphate + NADH + H(+). It participates in carbohydrate degradation; glycolysis; pyruvate from D-glyceraldehyde 3-phosphate: step 1/5. Catalyzes the oxidative phosphorylation of glyceraldehyde 3-phosphate (G3P) to 1,3-bisphosphoglycerate (BPG) using the cofactor NAD. The first reaction step involves the formation of a hemiacetal intermediate between G3P and a cysteine residue, and this hemiacetal intermediate is then oxidized to a thioester, with concomitant reduction of NAD to NADH. The reduced NADH is then exchanged with the second NAD, and the thioester is attacked by a nucleophilic inorganic phosphate to produce BPG. The sequence is that of Glyceraldehyde-3-phosphate dehydrogenase (gap) from Thermotoga maritima (strain ATCC 43589 / DSM 3109 / JCM 10099 / NBRC 100826 / MSB8).